Here is a 270-residue protein sequence, read N- to C-terminus: Thiazole synthase (270 aa).

Residue K112 is the Schiff-base intermediate with DXP of the active site. 1-deoxy-D-xylulose 5-phosphate-binding positions include G173, 199–200 (AG), and 221–222 (NS).

It belongs to the ThiG family. Homotetramer. Forms heterodimers with either ThiH or ThiS.

It localises to the cytoplasm. The catalysed reaction is [ThiS sulfur-carrier protein]-C-terminal-Gly-aminoethanethioate + 2-iminoacetate + 1-deoxy-D-xylulose 5-phosphate = [ThiS sulfur-carrier protein]-C-terminal Gly-Gly + 2-[(2R,5Z)-2-carboxy-4-methylthiazol-5(2H)-ylidene]ethyl phosphate + 2 H2O + H(+). It functions in the pathway cofactor biosynthesis; thiamine diphosphate biosynthesis. Its function is as follows. Catalyzes the rearrangement of 1-deoxy-D-xylulose 5-phosphate (DXP) to produce the thiazole phosphate moiety of thiamine. Sulfur is provided by the thiocarboxylate moiety of the carrier protein ThiS. In vitro, sulfur can be provided by H(2)S. This Pseudomonas putida (strain ATCC 700007 / DSM 6899 / JCM 31910 / BCRC 17059 / LMG 24140 / F1) protein is Thiazole synthase.